We begin with the raw amino-acid sequence, 426 residues long: Pregnancy-specific beta-1-glycoprotein 9 (426 aa).

The N-terminal stretch at 1–34 is a signal peptide; it reads MGPLPAPSCTQRITWKGLLLTASLLNFWNPPTTA. The 110-residue stretch at 35–144 folds into the Ig-like V-type domain; it reads EVTIEAQPPK…IRHFTFTLYL (110 aa). Asn104 and Asn111 each carry an N-linked (GlcNAc...) asparagine glycan. The short motif at 127–129 is the Cell attachment site element; it reads RGD. Ig-like C2-type domains are found at residues 147-234, 242-326, and 335-410; these read PKPY…VTLN, PYIT…PVIL, and PRIY…KSMT. 3 disulfides stabilise this stretch: Cys169–Cys217, Cys262–Cys310, and Cys354–Cys394. N-linked (GlcNAc...) asparagine glycans are attached at residues Asn199, Asn268, Asn303, and Asn387.

Belongs to the immunoglobulin superfamily. CEA family. In terms of assembly, interacts with latency-associated peptide; leading to TGFB1 activation.

It is found in the secreted. In terms of biological role, binds to the small latent transforming growth factor-beta complex, consisting of the N-terminal TGFB1 latency-associated peptide (LAP) and the mature form of TGFB1, thereby leading to the activation of TGFB1. The activation of TGFB1 leads to stimulation of naive CD4(+) T-cells to increase FoxP3 expression and to an increase in the number of FoxP3(+) regulatory T-cells. Induces the differentiation of a suppressive CD4(+)LAP(+)FoxP3(-) T-cell subset. Induces the secretion of TGFB1 in macrophages, but not in activated CD4(+) T-cells. May reduce the expression of several pro-inflammatory cytokines and chemokines by CD4(+) T-cells, including IL2 and IL6. This is Pregnancy-specific beta-1-glycoprotein 9 (PSG9) from Homo sapiens (Human).